The chain runs to 891 residues: MSFMDNLFNMADKKELKKFNKTVDIIDSLEPKFESMADSELKNMTNIFKERLANGESIDDILPEAFAVVREVSKRVLGLRHYRVQMIGGIVLHQGRIAEMKTGEGKTLVATAPVYLNALTGKGVHVVTVNDYLAKRDRDQMAKIYEFLGMSVGVIIHGQNPKVRKEQYDCDITYGTNNEYGFDYLKDNMVIHKEQRVQRGLNYAIVDEVDSILIDEARTPLIISGPGDKSTHLYSDANTFVLTLKPDDYELEEKDKAVSLTASGIQKAEVYFNVDNITDISHTELYHHINQALRAHVIMKKDVDYVAKDGEIVIVDEFTGRLMFGRRYSEGLHQAIEAKEGLKIQRESKTLATVTFQNYFRMYKKLSGMTGTAKTEEEEFKAIYKMDVFQVPTNKLMIREDLPDCVYKSEIGKFNAVAQEIIERHKVNQPILVGTVSIEKSELLSQILKKKGIKHEVLNAKHHDKEAEIIAQAGRLGAVTIATNMAGRGTDIVLGGNPDFLTKREMRRNGFKEEIVNRVDTPIEGIPVKGNEILFEAREEYEKLFEKFKQQTQEEQKQVVEAGGLAIIGTERHESRRIDNQLRGRAGRQGDPGSSRFYIGLDDDLMRLFGSDRISGIVDKIGLEEDMPIEHRILSKSIEGAQKKVEGKNFGIRKHVLQYDDVMNKQREIIYAERKRVLEGEDLQEQIQSMTHSIIEEAVTLYTQDKGFDEEGFKEHMYNLFLPKGSIEIPEIEKLNPVEITEKVYEIAMKIYTSKEEQVGYERMREVERVILLQAVDNHWIDHIDAMDQLRQGIGLRAVGQQDPVIAYKMEGFDMFDEMNKHIKEDTVRYLFNITIETPVERKAVVDVENLSSPSDGTLPTSKTVKKDEKVGRNDLCPCGSGKKYKNCCGR.

ATP is bound by residues Gln-85, 103-107, and Asp-491; that span reads GEGKT. Positions 877, 879, 888, and 889 each coordinate Zn(2+).

The protein belongs to the SecA family. Monomer and homodimer. Part of the essential Sec protein translocation apparatus which comprises SecA, SecYEG and auxiliary proteins SecDF. Other proteins may also be involved. The cofactor is Zn(2+).

The protein resides in the cell membrane. Its subcellular location is the cytoplasm. The catalysed reaction is ATP + H2O + cellular proteinSide 1 = ADP + phosphate + cellular proteinSide 2.. Its function is as follows. Part of the Sec protein translocase complex. Interacts with the SecYEG preprotein conducting channel. Has a central role in coupling the hydrolysis of ATP to the transfer of proteins into and across the cell membrane, serving as an ATP-driven molecular motor driving the stepwise translocation of polypeptide chains across the membrane. The protein is Protein translocase subunit SecA 1 of Clostridioides difficile (strain 630) (Peptoclostridium difficile).